The primary structure comprises 331 residues: Phosphate acyltransferase (331 aa).

Belongs to the PlsX family. As to quaternary structure, homodimer. Probably interacts with PlsY.

It localises to the cytoplasm. It carries out the reaction a fatty acyl-[ACP] + phosphate = an acyl phosphate + holo-[ACP]. The protein operates within lipid metabolism; phospholipid metabolism. Its function is as follows. Catalyzes the reversible formation of acyl-phosphate (acyl-PO(4)) from acyl-[acyl-carrier-protein] (acyl-ACP). This enzyme utilizes acyl-ACP as fatty acyl donor, but not acyl-CoA. The sequence is that of Phosphate acyltransferase from Mesoplasma florum (strain ATCC 33453 / NBRC 100688 / NCTC 11704 / L1) (Acholeplasma florum).